A 906-amino-acid polypeptide reads, in one-letter code: Probable helicase HelY (906 aa).

One can recognise a Helicase ATP-binding domain in the interval 26–184 (CSALERGHGV…WIQTVRGDTT (159 aa)). 39-46 (APTGAGKT) lines the ATP pocket. The DEVH box motif lies at 132-135 (DEVH). Positions 259–463 (GRPEVIAKLD…SYNMTINLVH (205 aa)) constitute a Helicase C-terminal domain.

It belongs to the helicase family. SKI2 subfamily.

This chain is Probable helicase HelY (helY), found in Mycobacterium tuberculosis (strain CDC 1551 / Oshkosh).